The following is a 315-amino-acid chain: WD repeat domain-containing protein 83 (315 aa).

WD repeat units follow at residues 23-62 (CSQG…LLRT), 65-104 (GHGY…VVRK), 107-146 (GHAG…PEPV), 151-188 (EARD…VSSD), 190-228 (VGSP…LLGE), 231-272 (GHKN…LALA), and 275-313 (VGSN…AEGG).

It belongs to the WD repeat MORG1 family. Interacts with EGLN3/PHD3. Interacts with ERK signaling proteins MAP2K1/MEK1, MAP2K2/MEK2, LAMTOR3, ARAF/Raf-1, MAPK1/ERK2 and MAPK3/ERK1. Identified in the spliceosome C complex. Interacts with PARD6B and CRB3. Interacts strongly with GTP-bound RRAGA but not with inactive GDP-bound. Interacts with p62/SQSTM1. In terms of tissue distribution, ubiquitous.

It is found in the cytoplasm. The protein resides in the lysosome. It localises to the nucleus. Molecular scaffold protein for various multimeric protein complexes. Acts as a module in the assembly of a multicomponent scaffold for the ERK pathway, linking ERK responses to specific agonists. At low concentrations it enhances ERK activation, whereas high concentrations lead to the inhibition of ERK activation. Also involved in response to hypoxia by acting as a negative regulator of HIF1A/HIF-1-alpha via its interaction with EGLN3/PHD3. May promote degradation of HIF1A. May act by recruiting signaling complexes to a specific upstream activator. May also be involved in pre-mRNA splicing. Participates in tight junction development by regulating apico-basal polarity, a key step in tissue development and organization. Mechanistically, regulates the translocation of PAR6-aPKC from the cytoplasm to the apical surface by acting as an adapter between PARD6B AND CRB3. Also acts as a negative regulator of mTORC1 under nutrient-rich conditions by binding to the active Rag GTPases to inhibit mTORC1 localization to the lysosome and phosphorylation of downstream targets. This facilitates constitutive basal autophagy during nutrient availability. The chain is WD repeat domain-containing protein 83 (Wdr83) from Mus musculus (Mouse).